The sequence spans 579 residues: Fatty-acid amide hydrolase 1 (579 aa).

A helical transmembrane segment spans residues 9–29 (ALPGASGVALACCFVAAAVAL). Residues 30-403 (RWSGRRTARG…GDFVDPCLGD (374 aa)) lie on the Cytoplasmic side of the membrane. Lys142 acts as the Charge relay system in catalysis. Substrate is bound by residues Met191, Ser217, and 238–241 (IGGS). The active-site Charge relay system is Ser217. Ser241 serves as the catalytic Acyl-ester intermediate. At Ser241 the chain carries Phosphoserine. Residues 404 to 433 (LVSILKLPQWLKGLLAFLVKPLLPRLSAFL) lie within the membrane without spanning it. Over 434–579 (SNMKSRSAGK…RLMTPEKQSS (146 aa)) the chain is Cytoplasmic.

The protein belongs to the amidase family. In terms of assembly, homodimer. Highly expressed in the brain, small intestine, pancreas, skeletal muscle and testis. Also expressed in the kidney, liver, lung, placenta and prostate.

It is found in the endomembrane system. The protein resides in the cytoplasm. It localises to the cytoskeleton. The enzyme catalyses N-(5Z,8Z,11Z,14Z-eicosatetraenoyl)-ethanolamine + H2O = ethanolamine + (5Z,8Z,11Z,14Z)-eicosatetraenoate. It carries out the reaction (9Z)-octadecenamide + H2O = (9Z)-octadecenoate + NH4(+). It catalyses the reaction 2-(5Z,8Z,11Z,14Z-eicosatetraenoyl)-glycerol + H2O = glycerol + (5Z,8Z,11Z,14Z)-eicosatetraenoate + H(+). The catalysed reaction is N-(9Z-octadecenoyl) ethanolamine + H2O = ethanolamine + (9Z)-octadecenoate. The enzyme catalyses N-hexadecanoylethanolamine + H2O = ethanolamine + hexadecanoate. It carries out the reaction hexadecanamide + H2O = hexadecanoate + NH4(+). It catalyses the reaction tetradecamide + H2O = tetradecanoate + NH4(+). The catalysed reaction is N-(9Z-octadecenoyl)-taurine + H2O = taurine + (9Z)-octadecenoate. The enzyme catalyses (9Z,12Z,15Z)-octadecatrienamide + H2O = (9Z,12Z,15Z)-octadecatrienoate + NH4(+). It carries out the reaction (5Z,8Z,11Z,14Z)-eicosatetraenamide + H2O = (5Z,8Z,11Z,14Z)-eicosatetraenoate + NH4(+). It catalyses the reaction (6Z)-octadecenamide + H2O = (6Z)-octadecenoate + NH4(+). The catalysed reaction is (15Z)-tetracosenamide + H2O = (15Z)-tetracosenoate + NH4(+). The enzyme catalyses (8Z,11Z,14Z)-eicosatrienamide + H2O = (8Z,11Z,14Z)-eicosatrienoate + NH4(+). It carries out the reaction (11Z,14Z,17Z)-eicosatrienamide + H2O = (11Z,14Z,17Z)-eicosatrienoate + NH4(+). It catalyses the reaction (11Z,14Z)-eicosadienamide + H2O = (11Z,14Z)-eicosadienoate + NH4(+). The catalysed reaction is (9Z,12Z)-octadecadienamide + H2O = (9Z,12Z)-octadecadienoate + NH4(+). The enzyme catalyses 1-O-methyl-(5Z,8Z,11Z,14Z)-eicosatetraenoate + H2O = methanol + (5Z,8Z,11Z,14Z)-eicosatetraenoate + H(+). It carries out the reaction (11Z)-eicosenamide + H2O = (11Z)-eicosenoate + NH4(+). It catalyses the reaction N-(9Z-hexadecenoyl) ethanolamine + H2O = (9Z)-hexadecenoate + ethanolamine. The catalysed reaction is N-octadecanoyl ethanolamine + H2O = octadecanoate + ethanolamine. The enzyme catalyses N-docosanoyl-ethanolamine + H2O = docosanoate + ethanolamine. It carries out the reaction N-tetracosanoyl-taurine + H2O = tetracosanoate + taurine. It catalyses the reaction N-(15Z-tetracosenoyl)-ethanolamine + H2O = (15Z)-tetracosenoate + ethanolamine. The catalysed reaction is N-docosanoyl-taurine + H2O = docosanoate + taurine. The enzyme catalyses N-(15Z-tetracosenoyl)-taurine + H2O = (15Z)-tetracosenoate + taurine. It carries out the reaction N-tricosanoyl-taurine + H2O = tricosanoate + taurine. It catalyses the reaction (9Z)-octadecenoate + glycine = N-(9Z-octadecenoyl)glycine + H2O. The catalysed reaction is N-(5Z,8Z,11Z,14Z)-eicosatetraenoyl-glycine + H2O = (5Z,8Z,11Z,14Z)-eicosatetraenoate + glycine. The enzyme catalyses N-(5Z,8Z,11Z,14Z-eicosatetraenoyl)-L-serine + H2O = (5Z,8Z,11Z,14Z)-eicosatetraenoate + L-serine. With respect to regulation, inhibited by O-aryl carbamates and alpha-keto heterocycles. Inhibited by trifluoromethyl ketone. Catalyzes the hydrolysis of endogenous amidated lipids like the sleep-inducing lipid oleamide ((9Z)-octadecenamide), the endocannabinoid anandamide (N-(5Z,8Z,11Z,14Z-eicosatetraenoyl)-ethanolamine), as well as other fatty amides, to their corresponding fatty acids, thereby regulating the signaling functions of these molecules. Hydrolyzes polyunsaturated substrate anandamide preferentially as compared to monounsaturated substrates. It can also catalyze the hydrolysis of the endocannabinoid 2-arachidonoylglycerol (2-(5Z,8Z,11Z,14Z-eicosatetraenoyl)-glycerol). FAAH cooperates with PM20D1 in the hydrolysis of amino acid-conjugated fatty acids such as N-fatty acyl glycine and N-fatty acyl-L-serine, thereby acting as a physiological regulator of specific subsets of intracellular, but not of extracellular, N-fatty acyl amino acids. The polypeptide is Fatty-acid amide hydrolase 1 (FAAH) (Homo sapiens (Human)).